A 391-amino-acid polypeptide reads, in one-letter code: mRNA-capping enzyme subunit alpha (391 aa).

The active-site N6-GMP-lysine intermediate is Lys63. Residues 363–391 form a disordered region; the sequence is KERNRRPRDEDRKRVGGDDHDHGAKRARQ.

Belongs to the eukaryotic GTase family. Heterodimer. The mRNA-capping enzyme is composed of two separate chains alpha and beta, respectively a mRNA guanylyltransferase and an mRNA 5'-triphosphate monophosphatase.

It is found in the nucleus. The catalysed reaction is a 5'-end diphospho-ribonucleoside in mRNA + GTP + H(+) = a 5'-end (5'-triphosphoguanosine)-ribonucleoside in mRNA + diphosphate. Its function is as follows. Second step of mRNA capping. Transfer of the GMP moiety of GTP to the 5'-end of RNA via an enzyme-GMP covalent reaction intermediate. The sequence is that of mRNA-capping enzyme subunit alpha (CEG1) from Yarrowia lipolytica (strain CLIB 122 / E 150) (Yeast).